The primary structure comprises 153 residues: Ribonuclease K3 (153 aa).

Positions 1–26 are cleaved as a signal peptide; that stretch reads MGPDLRCFPLLLLLLGLWWSVRPLCA. Asn30 carries an N-linked (GlcNAc...) asparagine glycan. His41 serves as the catalytic Proton acceptor. 4 cysteine pairs are disulfide-bonded: Cys49–Cys107, Cys63–Cys117, Cys81–Cys132, and Cys88–Cys95. N-linked (GlcNAc...) asparagine glycosylation occurs at Asn58. 64–68 provides a ligand contact to substrate; the sequence is KPQNT. Asn85 carries an N-linked (GlcNAc...) asparagine glycan. Lys89 contacts substrate. Residue His148 is the Proton donor of the active site.

Belongs to the pancreatic ribonuclease family. In terms of assembly, interacts (via N-terminus) with bacterial lipopolysaccharide (LPS). In terms of tissue distribution, kidney.

It is found in the secreted. The protein localises to the lysosome. Its subcellular location is the cytoplasmic granule. Its function is as follows. Ribonuclease which shows a preference for the pyrimidines uridine and cytosine. Has potent antibacterial activity against a range of Gram-positive and Gram-negative bacteria, including P.aeruginosa, A.baumanii, M.luteus, S.aureus, E.faecalis, E.faecium, S.saprophyticus and E.coli. Causes loss of bacterial membrane integrity, and also promotes agglutination of Gram-negative bacteria. Probably contributes to urinary tract sterility. Bactericidal activity is independent of RNase activity. This Sus scrofa (Pig) protein is Ribonuclease K3 (RNASE6).